A 65-amino-acid polypeptide reads, in one-letter code: 7 kDa A-type inclusion protein (65 aa).

Residues M1–A20 are compositionally biased toward polar residues. A disordered region spans residues M1 to I32.

This chain is 7 kDa A-type inclusion protein, found in Bos taurus (Bovine).